A 373-amino-acid chain; its full sequence is UDP-N-acetylglucosamine--N-acetylmuramyl-(pentapeptide) pyrophosphoryl-undecaprenol N-acetylglucosamine transferase (373 aa).

Residues 14-16, Asn-128, Arg-165, Ser-199, and Gln-295 contribute to the UDP-N-acetyl-alpha-D-glucosamine site; that span reads TAG.

Belongs to the glycosyltransferase 28 family. MurG subfamily.

Its subcellular location is the cell membrane. The enzyme catalyses di-trans,octa-cis-undecaprenyl diphospho-N-acetyl-alpha-D-muramoyl-L-alanyl-D-glutamyl-meso-2,6-diaminopimeloyl-D-alanyl-D-alanine + UDP-N-acetyl-alpha-D-glucosamine = di-trans,octa-cis-undecaprenyl diphospho-[N-acetyl-alpha-D-glucosaminyl-(1-&gt;4)]-N-acetyl-alpha-D-muramoyl-L-alanyl-D-glutamyl-meso-2,6-diaminopimeloyl-D-alanyl-D-alanine + UDP + H(+). Its pathway is cell wall biogenesis; peptidoglycan biosynthesis. In terms of biological role, cell wall formation. Catalyzes the transfer of a GlcNAc subunit on undecaprenyl-pyrophosphoryl-MurNAc-pentapeptide (lipid intermediate I) to form undecaprenyl-pyrophosphoryl-MurNAc-(pentapeptide)GlcNAc (lipid intermediate II). In Mycobacterium sp. (strain KMS), this protein is UDP-N-acetylglucosamine--N-acetylmuramyl-(pentapeptide) pyrophosphoryl-undecaprenol N-acetylglucosamine transferase.